A 2641-amino-acid chain; its full sequence is Inverse autotransporter adhesin YeeJ (2641 aa).

The first 26 residues, 1–26, serve as a signal peptide directing secretion; sequence MGIKLRRLTAGICLVTQLAFPMAAAA. The LysM domain occupies 50–98; it reads VPYILGALESAQSVAERFGISVAELRKLNQFRTFARGFDNVRQGDELDV. The segment at 99–118 is disordered; the sequence is PAQVSEKKLTPPPGNSSDNL. The inverse autotransporter stretch occupies residues 125–400; that stretch reads TSQQIGSLLA…SRYDLVDRNN (276 aa). Residues 513 to 605 are invasin 3 domain; sequence QKDSSVSLST…GVDAAKAPAV (93 aa). Big-1 domains follow at residues 617–711, 721–815, 822–913, 920–1017, 1024–1116, 1123–1220, 1227–1319, 1326–1423, 1430–1523, 1531–1633, 1641–1734, 1741–1837, 1844–1941, 1948–2032, 2048–2139, 2142–2236, and 2244–2336; these read HSSI…AGFI, IATL…VSFV, QVDL…VNFI, ALTL…MTFV, VVVL…VNIA, QVTL…VTFV, QVVL…VHFI, IIEL…SINV, HLTL…VTYV, EISL…VNFT, QVNL…VTLI, KLTS…PTEV, FTSL…LEAI, KLTL…VKVT, and VASF…ITLV. Positions 2538–2641 are C-type lectin domain; it reads KSWWVNAGDA…FAHATCYKNL (104 aa).

Belongs to the intimin/invasin family.

The protein resides in the cell outer membrane. Its function is as follows. A probable inverse autotransporter, it may be involved in biofilm formation and cell adhesion. May bind peptidoglycan via its LysM domain. Upon overexpression shows increased mature biofilm formation. The sequence is that of Inverse autotransporter adhesin YeeJ from Escherichia coli O17:K52:H18 (strain UMN026 / ExPEC).